We begin with the raw amino-acid sequence, 149 residues long: 3-hydroxyacyl-[acyl-carrier-protein] dehydratase FabZ (149 aa).

Residue His48 is part of the active site.

Belongs to the thioester dehydratase family. FabZ subfamily.

Its subcellular location is the cytoplasm. The enzyme catalyses a (3R)-hydroxyacyl-[ACP] = a (2E)-enoyl-[ACP] + H2O. Functionally, involved in unsaturated fatty acids biosynthesis. Catalyzes the dehydration of short chain beta-hydroxyacyl-ACPs and long chain saturated and unsaturated beta-hydroxyacyl-ACPs. The chain is 3-hydroxyacyl-[acyl-carrier-protein] dehydratase FabZ from Thermomicrobium roseum (strain ATCC 27502 / DSM 5159 / P-2).